The chain runs to 740 residues: 1,4-alpha-glucan branching enzyme GlgB (740 aa).

The active-site Nucleophile is D409. The Proton donor role is filled by E462.

It belongs to the glycosyl hydrolase 13 family. GlgB subfamily. In terms of assembly, monomer.

It catalyses the reaction Transfers a segment of a (1-&gt;4)-alpha-D-glucan chain to a primary hydroxy group in a similar glucan chain.. It functions in the pathway glycan biosynthesis; glycogen biosynthesis. Its function is as follows. Catalyzes the formation of the alpha-1,6-glucosidic linkages in glycogen by scission of a 1,4-alpha-linked oligosaccharide from growing alpha-1,4-glucan chains and the subsequent attachment of the oligosaccharide to the alpha-1,6 position. In Methylococcus capsulatus (strain ATCC 33009 / NCIMB 11132 / Bath), this protein is 1,4-alpha-glucan branching enzyme GlgB.